Consider the following 463-residue polypeptide: Cysteine--tRNA ligase (463 aa).

Residue C33 coordinates Zn(2+). The short motif at 35-45 (PTVYDFAHIGN) is the 'HIGH' region element. Residues C221, H246, and E250 each coordinate Zn(2+). The 'KMSKS' region motif lies at 279–283 (KMSKS). K282 is a binding site for ATP.

This sequence belongs to the class-I aminoacyl-tRNA synthetase family. In terms of assembly, monomer. Zn(2+) serves as cofactor.

The protein resides in the cytoplasm. The enzyme catalyses tRNA(Cys) + L-cysteine + ATP = L-cysteinyl-tRNA(Cys) + AMP + diphosphate. This is Cysteine--tRNA ligase from Rhizobium rhizogenes (strain K84 / ATCC BAA-868) (Agrobacterium radiobacter).